Reading from the N-terminus, the 540-residue chain is Cytochrome P450 monooxygenase prx8 (540 aa).

Residues 50 to 68 (ALGAAIALFACACAYALVA) traverse the membrane as a helical segment. Asn460 carries an N-linked (GlcNAc...) asparagine glycan. A heme-binding site is contributed by Cys483.

This sequence belongs to the cytochrome P450 family. Requires heme as cofactor.

The protein localises to the membrane. It functions in the pathway sesquiterpene biosynthesis. In terms of biological role, cytochrome P450 monooxygenase; part of the gene cluster that mediates the biosynthesis of PR-toxin, a bicyclic sesquiterpene belonging to the eremophilane class and acting as a mycotoxin. The first step of the pathway is catalyzed by the aristolochene synthase which performs the cyclization of trans,trans-farnesyl diphosphate (FPP) to the bicyclic sesquiterpene aristolochene. Following the formation of aristolochene, the non-oxygenated aristolochene is converted to the trioxygenated intermediate eremofortin B, via 7-epi-neopetasone. This conversion appears to involve three enzymes, a hydroxysterol oxidase-like enzyme, the quinone-oxidase prx3 that forms the quinone-type-structure in the bicyclic nucleus of aristolochene with the C8-oxo group and the C-3 hydroxyl group, and the P450 monooxygenase prx9 that introduces the epoxide at the double bond between carbons 1 and 2. No monoxy or dioxy-intermediates have been reported to be released to the broth, so these three early oxidative reactions may be coupled together. Eremofortin B is further oxidized by another P450 monooxygenase, that introduces a second epoxide between carbons 7 and 11 prior to acetylation to eremofortin A by the acetyltransferase prx11. The second epoxidation may be performed by a second P450 monooxygenase. After the acetylation step, eremofortin A is converted to eremofortin C and then to PR-toxin. First the conversion of eremofortin A to eremofortin C proceeds by oxidation of the side chain of the molecule at C-12 and is catalyzed by the short-chain oxidoreductase prx1. The cytochrome P450 monooxygenase prx8 also plays a role in this step. The primary alcohol formed at C-12 is finally oxidized by the short-chain alcohol dehydrogenase prx4 that forms PR-toxin. In Penicillium rubens (strain ATCC 28089 / DSM 1075 / NRRL 1951 / Wisconsin 54-1255) (Penicillium chrysogenum), this protein is Cytochrome P450 monooxygenase prx8.